A 139-amino-acid polypeptide reads, in one-letter code: Putative pre-16S rRNA nuclease (139 aa).

This sequence belongs to the YqgF nuclease family.

The protein resides in the cytoplasm. Could be a nuclease involved in processing of the 5'-end of pre-16S rRNA. This is Putative pre-16S rRNA nuclease from Legionella pneumophila (strain Paris).